A 232-amino-acid chain; its full sequence is PsbP domain-containing protein 2, chloroplastic (232 aa).

The transit peptide at 1–34 directs the protein to the chloroplast; sequence MWSQSFLGSAPKLCLFSSSLPPFSHHKIHKFFCF. The N-terminal 37 residues, 35 to 71, are a transit peptide targeting the thylakoid; the sequence is AQNPSSTVSINLSKRHLNLSILTLFFNGFLLDNKAKS.

Belongs to the PsbP family.

It is found in the plastid. The protein localises to the chloroplast thylakoid lumen. In Arabidopsis thaliana (Mouse-ear cress), this protein is PsbP domain-containing protein 2, chloroplastic (PPD2).